The chain runs to 419 residues: UDP-N-acetylglucosamine 1-carboxyvinyltransferase 2 (419 aa).

Position 24 to 25 (24 to 25) interacts with phosphoenolpyruvate; it reads KN. Position 94 (arginine 94) interacts with UDP-N-acetyl-alpha-D-glucosamine. The active-site Proton donor is the cysteine 118. Cysteine 118 is subject to 2-(S-cysteinyl)pyruvic acid O-phosphothioketal. Residues 123–127, aspartate 307, and isoleucine 329 contribute to the UDP-N-acetyl-alpha-D-glucosamine site; that span reads RPIDQ.

It belongs to the EPSP synthase family. MurA subfamily.

It is found in the cytoplasm. It catalyses the reaction phosphoenolpyruvate + UDP-N-acetyl-alpha-D-glucosamine = UDP-N-acetyl-3-O-(1-carboxyvinyl)-alpha-D-glucosamine + phosphate. The protein operates within cell wall biogenesis; peptidoglycan biosynthesis. In terms of biological role, cell wall formation. Adds enolpyruvyl to UDP-N-acetylglucosamine. The sequence is that of UDP-N-acetylglucosamine 1-carboxyvinyltransferase 2 from Staphylococcus aureus (strain MRSA252).